Here is a 609-residue protein sequence, read N- to C-terminus: Dihydroxyacetone kinase (609 aa).

Positions 8-355 constitute a DhaK domain; the sequence is YKQDLVHAHL…LDYPTKVPGW (348 aa). Substrate is bound by residues 53 to 56, lysine 104, and aspartate 109; that span reads GSGH. The active-site Tele-hemiaminal-histidine intermediate is histidine 232. Residues 392 to 600 form the DhaL domain; sequence STVKAVLESG…LAALVDGFAE (209 aa). ATP is bound by residues 421-424, 467-468, 523-524, and 585-587; these read DGDC, TS, TL, and DPG.

This sequence belongs to the dihydroxyacetone kinase (DAK) family.

The enzyme catalyses dihydroxyacetone + ATP = dihydroxyacetone phosphate + ADP + H(+). It carries out the reaction D-glyceraldehyde + ATP = D-glyceraldehyde 3-phosphate + ADP + H(+). It functions in the pathway polyol metabolism; glycerol fermentation; glycerone phosphate from glycerol (oxidative route): step 2/2. In terms of biological role, catalyzes both the phosphorylation of dihydroxyacetone and of glyceraldehyde. This is Dihydroxyacetone kinase (DAK) from Pichia angusta (Yeast).